The primary structure comprises 494 residues: Glutamyl-tRNA(Gln) amidotransferase subunit A (494 aa).

Residues Lys-79 and Ser-159 each act as charge relay system in the active site. Ser-183 (acyl-ester intermediate) is an active-site residue.

This sequence belongs to the amidase family. GatA subfamily. In terms of assembly, heterotrimer of A, B and C subunits.

It carries out the reaction L-glutamyl-tRNA(Gln) + L-glutamine + ATP + H2O = L-glutaminyl-tRNA(Gln) + L-glutamate + ADP + phosphate + H(+). Its function is as follows. Allows the formation of correctly charged Gln-tRNA(Gln) through the transamidation of misacylated Glu-tRNA(Gln) in organisms which lack glutaminyl-tRNA synthetase. The reaction takes place in the presence of glutamine and ATP through an activated gamma-phospho-Glu-tRNA(Gln). The protein is Glutamyl-tRNA(Gln) amidotransferase subunit A of Bartonella bacilliformis (strain ATCC 35685 / KC583 / Herrer 020/F12,63).